The primary structure comprises 428 residues: Phosphomethylpyrimidine synthase 1 (428 aa).

Residues Asn-65, Met-94, Tyr-123, His-158, 180-182 (SRG), 221-224 (DGMR), and Glu-260 contribute to the substrate site. His-264 contacts Zn(2+). Tyr-287 is a substrate binding site. His-328 contributes to the Zn(2+) binding site. Cys-405, Cys-408, and Cys-412 together coordinate [4Fe-4S] cluster.

It belongs to the ThiC family. Requires [4Fe-4S] cluster as cofactor.

The enzyme catalyses 5-amino-1-(5-phospho-beta-D-ribosyl)imidazole + S-adenosyl-L-methionine = 4-amino-2-methyl-5-(phosphooxymethyl)pyrimidine + CO + 5'-deoxyadenosine + formate + L-methionine + 3 H(+). It participates in cofactor biosynthesis; thiamine diphosphate biosynthesis. Functionally, catalyzes the synthesis of the hydroxymethylpyrimidine phosphate (HMP-P) moiety of thiamine from aminoimidazole ribotide (AIR) in a radical S-adenosyl-L-methionine (SAM)-dependent reaction. In Methanosarcina mazei (strain ATCC BAA-159 / DSM 3647 / Goe1 / Go1 / JCM 11833 / OCM 88) (Methanosarcina frisia), this protein is Phosphomethylpyrimidine synthase 1.